Reading from the N-terminus, the 693-residue chain is MAREFSLEKTRNIGIMAHVDAGKTTTTERILYYTGKIHKIGETHEGASQMDWMEQEQERGITITSAATTAQWKGYRVNIIDTPGHVDFTIEVQRSLRVLDGAVTVLDSQSGVEPQTETVWRQATEYKVPRIVFCNKMDKIGADFFYSVESLHDRLQANAHPIQIPIGAEEDFTGIIDLIKMKAEIYTNDLGTDIQETDIPEDYLEKAQEWREKLVEAVAETDEDLMMKYLEGEEITEEELVAGIRQATINVEFFPVLAGSAFKNKGVQLMLDAVLDYLPSPLDIDAIKGIDTKTDEETTRPADDEAPFASLAFKVMTDPFVGRLTFFRVYSGVLESGSYVLNASKGKKERIGRILQMHANTRQEIDKVYSGDIAAAVGLKDTTTGDTLCALDAPVILESIEFPDPVIQVAVEPKSKADQDKMGVALQKLAEEDPSFRVETNVETGETVISGMGELHLDVLVDRMKREFKVEANVGAPQVSYRETFRAATKAEGKFVRQSGGKGQYGHVWVEFTPNEEGKGFEFENAIVGGVVPREYIPAVEKGLEDSMNNGVLAGYPLVDIKAKLYDGSYHDVDSNETAFRVAASMALKAAAKNANPVILEPMMKVTITVPEDYLGDIMGHVTSRRGRVEGMEAHGNSQIVNAMVPLAEMFGYATTLRSATQGRGTFMMVFDHYEDVPKSVQEEIIKKNGGNA.

A tr-type G domain is found at glutamate 8–leucine 282. GTP is bound by residues alanine 17–threonine 24, aspartate 81–histidine 85, and asparagine 135–aspartate 138.

It belongs to the TRAFAC class translation factor GTPase superfamily. Classic translation factor GTPase family. EF-G/EF-2 subfamily.

Its subcellular location is the cytoplasm. In terms of biological role, catalyzes the GTP-dependent ribosomal translocation step during translation elongation. During this step, the ribosome changes from the pre-translocational (PRE) to the post-translocational (POST) state as the newly formed A-site-bound peptidyl-tRNA and P-site-bound deacylated tRNA move to the P and E sites, respectively. Catalyzes the coordinated movement of the two tRNA molecules, the mRNA and conformational changes in the ribosome. The chain is Elongation factor G from Enterococcus faecalis (strain ATCC 700802 / V583).